The sequence spans 275 residues: Large ribosomal subunit protein uL2 (275 aa).

The segment at 214–275 (RWRGNRPTVR…NKFILSHRNK (62 aa)) is disordered. A compositionally biased stretch (basic residues) spans 255–275 (KGKKTRSNKRTNKFILSHRNK).

This sequence belongs to the universal ribosomal protein uL2 family. As to quaternary structure, part of the 50S ribosomal subunit. Forms a bridge to the 30S subunit in the 70S ribosome.

Its function is as follows. One of the primary rRNA binding proteins. Required for association of the 30S and 50S subunits to form the 70S ribosome, for tRNA binding and peptide bond formation. It has been suggested to have peptidyltransferase activity; this is somewhat controversial. Makes several contacts with the 16S rRNA in the 70S ribosome. The sequence is that of Large ribosomal subunit protein uL2 from Blochmanniella pennsylvanica (strain BPEN).